The sequence spans 103 residues: Phosphoribosyl-ATP pyrophosphatase (103 aa).

Belongs to the PRA-PH family.

It is found in the cytoplasm. It catalyses the reaction 1-(5-phospho-beta-D-ribosyl)-ATP + H2O = 1-(5-phospho-beta-D-ribosyl)-5'-AMP + diphosphate + H(+). It participates in amino-acid biosynthesis; L-histidine biosynthesis; L-histidine from 5-phospho-alpha-D-ribose 1-diphosphate: step 2/9. This chain is Phosphoribosyl-ATP pyrophosphatase (hisE), found in Cereibacter sphaeroides (strain ATCC 17023 / DSM 158 / JCM 6121 / CCUG 31486 / LMG 2827 / NBRC 12203 / NCIMB 8253 / ATH 2.4.1.) (Rhodobacter sphaeroides).